The following is a 92-amino-acid chain: Probable Fe(2+)-trafficking protein (92 aa).

It belongs to the Fe(2+)-trafficking protein family.

In terms of biological role, could be a mediator in iron transactions between iron acquisition and iron-requiring processes, such as synthesis and/or repair of Fe-S clusters in biosynthetic enzymes. This Xanthomonas campestris pv. campestris (strain 8004) protein is Probable Fe(2+)-trafficking protein.